We begin with the raw amino-acid sequence, 353 residues long: Photosystem II protein D1 (353 aa).

An N-acetylthreonine modification is found at Thr-2. Thr-2 is modified (phosphothreonine). 3 helical membrane passes run Tyr-29–Ser-46, His-118–Leu-133, and Trp-142–Ala-156. Residue His-118 coordinates chlorophyll a. Tyr-126 serves as a coordination point for pheophytin a. Positions 170 and 189 each coordinate [CaMn4O5] cluster. A helical membrane pass occupies residues Phe-197–Leu-218. His-198 serves as a coordination point for chlorophyll a. Residues His-215 and Ser-264 to Phe-265 each bind a quinone. A Fe cation-binding site is contributed by His-215. Residue His-272 coordinates Fe cation. Residues Phe-274 to Leu-288 form a helical membrane-spanning segment. Positions 332, 333, 342, and 344 each coordinate [CaMn4O5] cluster. A propeptide spanning residues Ala-345–Gly-353 is cleaved from the precursor.

Belongs to the reaction center PufL/M/PsbA/D family. As to quaternary structure, PSII is composed of 1 copy each of membrane proteins PsbA, PsbB, PsbC, PsbD, PsbE, PsbF, PsbH, PsbI, PsbJ, PsbK, PsbL, PsbM, PsbT, PsbX, PsbY, PsbZ, Psb30/Ycf12, at least 3 peripheral proteins of the oxygen-evolving complex and a large number of cofactors. It forms dimeric complexes. The D1/D2 heterodimer binds P680, chlorophylls that are the primary electron donor of PSII, and subsequent electron acceptors. It shares a non-heme iron and each subunit binds pheophytin, quinone, additional chlorophylls, carotenoids and lipids. D1 provides most of the ligands for the Mn4-Ca-O5 cluster of the oxygen-evolving complex (OEC). There is also a Cl(-1) ion associated with D1 and D2, which is required for oxygen evolution. The PSII complex binds additional chlorophylls, carotenoids and specific lipids. serves as cofactor. Post-translationally, tyr-161 forms a radical intermediate that is referred to as redox-active TyrZ, YZ or Y-Z. C-terminally processed by CTPA; processing is essential to allow assembly of the oxygen-evolving complex and thus photosynthetic growth.

The protein localises to the plastid. The protein resides in the chloroplast thylakoid membrane. The catalysed reaction is 2 a plastoquinone + 4 hnu + 2 H2O = 2 a plastoquinol + O2. Its function is as follows. Photosystem II (PSII) is a light-driven water:plastoquinone oxidoreductase that uses light energy to abstract electrons from H(2)O, generating O(2) and a proton gradient subsequently used for ATP formation. It consists of a core antenna complex that captures photons, and an electron transfer chain that converts photonic excitation into a charge separation. The D1/D2 (PsbA/PsbD) reaction center heterodimer binds P680, the primary electron donor of PSII as well as several subsequent electron acceptors. In Panax ginseng (Korean ginseng), this protein is Photosystem II protein D1.